We begin with the raw amino-acid sequence, 471 residues long: 5-hydroxytryptamine receptor 2A (471 aa).

Residues 1–80 are Extracellular-facing; the sequence is MDILCEENTS…LQEKNWSALL (80 aa). 5 N-linked (GlcNAc...) asparagine glycosylation sites follow: asparagine 8, asparagine 38, asparagine 44, asparagine 51, and asparagine 54. The helical transmembrane segment at 81 to 97 threads the bilayer; that stretch reads TAVVIILTIAGNILVIM. Topologically, residues 98 to 111 are cytoplasmic; it reads AVSLEKKLQNATNY. A helical transmembrane segment spans residues 112–137; sequence FLMSLAIADMLLGFLVMPVSMLTILY. At 138-146 the chain is on the extracellular side; that stretch reads GYRWPLPSK. A helical transmembrane segment spans residues 147-171; that stretch reads LCAVWIYLDVLFSTASIMHLCAISL. Cysteines 148 and 227 form a disulfide. Aspartate 155 provides a ligand contact to serotonin. The DRY motif; important for ligand-induced conformation changes motif lies at 172–174; sequence DRY. Topologically, residues 172 to 191 are cytoplasmic; the sequence is DRYVAIQNPIHHSRFNSRTK. A helical transmembrane segment spans residues 192 to 215; the sequence is AFLKIIAVWTISVGISMPIPVFGL. Topologically, residues 216-232 are extracellular; that stretch reads QDDSKVFKEGSCLLADD. Residues 233-258 traverse the membrane as a helical segment; the sequence is NFVLIGSFVSFFIPLTIMVITYFLTI. The Cytoplasmic portion of the chain corresponds to 259 to 322; that stretch reads KSLQKEATLC…QSISNEQKAC (64 aa). Residue serine 280 is modified to Phosphoserine. A helical membrane pass occupies residues 323–348; the sequence is KVLGIVFFLFVVMWCPFFITNIMAVI. Position 343 (asparagine 343) interacts with serotonin. A disulfide bridge connects residues cysteine 349 and cysteine 353. Residues 349 to 356 are Extracellular-facing; sequence CKESCNED. The helical transmembrane segment at 357 to 382 threads the bilayer; sequence VIGALLNVFVWIGYLSSAVNPLVYTL. The NPxxY motif; important for ligand-induced conformation changes and signaling signature appears at 376–380; that stretch reads NPLVY. Residues 383–471 are Cytoplasmic-facing; that stretch reads FNKTYRSAFS…DGVNEKVSCV (89 aa). Residues 451–465 are compositionally biased toward basic and acidic residues; sequence QHSEEASKDNSDGVN. The segment at 451-471 is disordered; that stretch reads QHSEEASKDNSDGVNEKVSCV. Residues 469 to 471 carry the PDZ-binding motif; the sequence is SCV.

The protein belongs to the G-protein coupled receptor 1 family. In terms of assembly, interacts (via C-terminus) with MPDZ and PATJ. May interact (via C-terminus) with MPP3, PRDX6, DLG4, DLG1, CASK, APBA1 and MAGI2. Interacts with GRM2 and DRD2; this may affect signaling. In terms of tissue distribution, detected in brain cortex (at protein level). Detected in blood platelets.

The protein localises to the cell membrane. It localises to the cell projection. The protein resides in the dendrite. Its subcellular location is the axon. It is found in the cytoplasmic vesicle. The protein localises to the membrane. It localises to the caveola. The protein resides in the presynapse. Its activity is regulated as follows. G-protein coupled receptor activity is regulated by lipids: oleamide increases HTR2A-mediated activity. Inhibited by IHCH-7179 small molecule: IHCH-7179 acts both as an agonist activator for HTR1A and as an antagonist inhibitor for HTR2A. G-protein coupled receptor for 5-hydroxytryptamine (serotonin). Also functions as a receptor for various drugs and psychoactive substances, including mescaline, psilocybin, 1-(2,5-dimethoxy-4-iodophenyl)-2-aminopropane (DOI) and lysergic acid diethylamide (LSD). Ligand binding causes a conformation change that triggers signaling via guanine nucleotide-binding proteins (G proteins) and modulates the activity of downstream effectors. HTR2A is coupled to G(q)/G(11) G alpha proteins and activates phospholipase C-beta, releasing diacylglycerol (DAG) and inositol 1,4,5-trisphosphate (IP3) second messengers that modulate the activity of phosphatidylinositol 3-kinase and promote the release of Ca(2+) ions from intracellular stores, respectively. Beta-arrestin family members inhibit signaling via G proteins and mediate activation of alternative signaling pathways. Affects neural activity, perception, cognition and mood. Plays a role in the regulation of behavior, including responses to anxiogenic situations and psychoactive substances. Plays a role in intestinal smooth muscle contraction, and may play a role in arterial vasoconstriction. Functionally, (Microbial infection) Acts as a receptor for human JC polyomavirus/JCPyV. This is 5-hydroxytryptamine receptor 2A from Homo sapiens (Human).